A 185-amino-acid polypeptide reads, in one-letter code: Large ribosomal subunit protein uL5 (185 aa).

Belongs to the universal ribosomal protein uL5 family. Part of the 50S ribosomal subunit; part of the 5S rRNA/L5/L18/L25 subcomplex. Contacts the 5S rRNA and the P site tRNA. Forms a bridge to the 30S subunit in the 70S ribosome.

In terms of biological role, this is one of the proteins that bind and probably mediate the attachment of the 5S RNA into the large ribosomal subunit, where it forms part of the central protuberance. In the 70S ribosome it contacts protein S13 of the 30S subunit (bridge B1b), connecting the 2 subunits; this bridge is implicated in subunit movement. Contacts the P site tRNA; the 5S rRNA and some of its associated proteins might help stabilize positioning of ribosome-bound tRNAs. This Rhizobium leguminosarum bv. trifolii (strain WSM2304) protein is Large ribosomal subunit protein uL5.